Consider the following 576-residue polypeptide: Arginine--tRNA ligase (576 aa).

Positions 126-136 (ANPTGPMHIGH) match the 'HIGH' region motif.

It belongs to the class-I aminoacyl-tRNA synthetase family. As to quaternary structure, monomer.

Its subcellular location is the cytoplasm. It carries out the reaction tRNA(Arg) + L-arginine + ATP = L-arginyl-tRNA(Arg) + AMP + diphosphate. This is Arginine--tRNA ligase from Rickettsia typhi (strain ATCC VR-144 / Wilmington).